Here is a 166-residue protein sequence, read N- to C-terminus: Signal peptidase complex catalytic subunit SEC11 (166 aa).

Over 1–9 (MNIRQQITQ) the chain is Cytoplasmic. The helical; Signal-anchor for type II membrane protein transmembrane segment at 10–30 (FLSLAYVFSSAFMLWKTLSVI) threads the bilayer. The Lumenal segment spans residues 31 to 166 (ANSHSPIVVV…LGLSSLFSNE (136 aa)). Active-site charge relay system residues include serine 44, histidine 83, and aspartate 108. Residues 152–163 (GMLGLLGLSSLF) form a C-terminal short (CTS) helix region.

It belongs to the peptidase S26B family. Component of the signal peptidase complex (SPC) composed of a catalytic subunit SEC11 and three accessory subunits SPC1, SPC2 and SPC3. The complex induces a local thinning of the ER membrane which is used to measure the length of the signal peptide (SP) h-region of protein substrates. This ensures the selectivity of the complex towards h-regions shorter than 18-20 amino acids. SPC associates with the translocon complex.

The protein localises to the endoplasmic reticulum membrane. The enzyme catalyses Cleavage of hydrophobic, N-terminal signal or leader sequences from secreted and periplasmic proteins.. Its function is as follows. Catalytic component of the signal peptidase complex (SPC) which catalyzes the cleavage of N-terminal signal sequences from nascent proteins as they are translocated into the lumen of the endoplasmic reticulum. Specifically cleaves N-terminal signal peptides that contain a hydrophobic alpha-helix (h-region) shorter than 18-20 amino acids. This is Signal peptidase complex catalytic subunit SEC11 (SEC11) from Candida albicans (strain SC5314 / ATCC MYA-2876) (Yeast).